A 255-amino-acid polypeptide reads, in one-letter code: Small ribosomal subunit protein uS3c (255 aa).

In terms of domain architecture, KH type-2 spans 51–124 (IRESSNTSYG…NKNQNKNTGQ (74 aa)). A disordered region spans residues 96–121 (EKNRDKNKSNKNSALDQSVNKNQNKN). The segment covering 108-121 (SALDQSVNKNQNKN) has biased composition (polar residues).

Belongs to the universal ribosomal protein uS3 family. As to quaternary structure, part of the 30S ribosomal subunit.

It is found in the plastid. The protein resides in the chloroplast. This is Small ribosomal subunit protein uS3c (rps3) from Chaetosphaeridium globosum (Charophycean green alga).